Here is a 449-residue protein sequence, read N- to C-terminus: Glucose-6-phosphate isomerase (449 aa).

The Proton donor role is filled by Glu-291. Residues His-312 and Lys-426 contribute to the active site.

Belongs to the GPI family.

The protein resides in the cytoplasm. It carries out the reaction alpha-D-glucose 6-phosphate = beta-D-fructose 6-phosphate. It functions in the pathway carbohydrate biosynthesis; gluconeogenesis. The protein operates within carbohydrate degradation; glycolysis; D-glyceraldehyde 3-phosphate and glycerone phosphate from D-glucose: step 2/4. Catalyzes the reversible isomerization of glucose-6-phosphate to fructose-6-phosphate. This Streptococcus pyogenes serotype M6 (strain ATCC BAA-946 / MGAS10394) protein is Glucose-6-phosphate isomerase.